The primary structure comprises 372 residues: Aryl-hydrocarbon-interacting protein-like 1 (372 aa).

Residues 53-145 form the PPIase FKBP-type domain; sequence REVGQPMHII…DLDELQKEPQ (93 aa). TPR repeat units lie at residues 178-211, 230-263, and 264-297; these read VPVL…LRNL, NTLI…HPGI, and VKAY…EPSM. The segment at 325-372 is disordered; it reads NMLSQGATWSPAEPPAEPPAESSTEPPAEPPAEPPAELTLTPGHPLQH.

As to quaternary structure, interacts with NUB1.

The protein localises to the cytoplasm. The protein resides in the nucleus. May be important in protein trafficking and/or protein folding and stabilization. This Saimiri boliviensis boliviensis (Bolivian squirrel monkey) protein is Aryl-hydrocarbon-interacting protein-like 1 (AIPL1).